The sequence spans 322 residues: Probable manganese-dependent inorganic pyrophosphatase (322 aa).

Positions 10, 14, 16, 86, 108, and 160 each coordinate Mn(2+).

It belongs to the PPase class C family. Requires Mn(2+) as cofactor.

It localises to the cytoplasm. It carries out the reaction diphosphate + H2O = 2 phosphate + H(+). The polypeptide is Probable manganese-dependent inorganic pyrophosphatase (ppaC) (Archaeoglobus fulgidus (strain ATCC 49558 / DSM 4304 / JCM 9628 / NBRC 100126 / VC-16)).